A 152-amino-acid polypeptide reads, in one-letter code: Aspartate carbamoyltransferase regulatory chain (152 aa).

Zn(2+) contacts are provided by cysteine 108, cysteine 113, cysteine 136, and cysteine 139.

It belongs to the PyrI family. As to quaternary structure, contains catalytic and regulatory chains. Zn(2+) serves as cofactor.

Involved in allosteric regulation of aspartate carbamoyltransferase. The sequence is that of Aspartate carbamoyltransferase regulatory chain from Pyrococcus furiosus (strain ATCC 43587 / DSM 3638 / JCM 8422 / Vc1).